A 197-amino-acid polypeptide reads, in one-letter code: tRNA(Phe) 7-((3-amino-3-carboxypropyl)-4-demethylwyosine(37)-N(4))-methyltransferase (197 aa).

It belongs to the TYW3 family.

The enzyme catalyses 4-demethyl-7-[(3S)-3-amino-3-carboxypropyl]wyosine(37) in tRNA(Phe) + S-adenosyl-L-methionine = 7-[(3S)-3-amino-3-carboxypropyl]wyosine(37) in tRNA(Phe) + S-adenosyl-L-homocysteine + H(+). Functionally, S-adenosyl-L-methionine-dependent methyltransferase that acts as a component of the wyosine derivatives biosynthesis pathway. Probably methylates N-4 position of wybutosine-86 to produce wybutosine-72. The polypeptide is tRNA(Phe) 7-((3-amino-3-carboxypropyl)-4-demethylwyosine(37)-N(4))-methyltransferase (Thermococcus sibiricus (strain DSM 12597 / MM 739)).